The chain runs to 60 residues: Large ribosomal subunit protein bL32 (60 aa).

Residues 1-60 form a disordered region; the sequence is MAVQQNKKSPSKRGMHRSHDALTNPPLAIEPTTGETHLRHHISPNGFYRGKKVIKTKNDD. Over residues 49 to 60 the composition is skewed to basic residues; the sequence is RGKKVIKTKNDD.

Belongs to the bacterial ribosomal protein bL32 family.

This is Large ribosomal subunit protein bL32 from Nitrosomonas eutropha (strain DSM 101675 / C91 / Nm57).